Consider the following 151-residue polypeptide: Histone H2A.2.1 (151 aa).

The residue at position 1 (methionine 1) is an N-acetylmethionine. 2 disordered regions span residues 1–22 (MDGSKAKKVAAKKFGGPRKKSV) and 129–151 (EKAEKAGAAPKSPKKTTKSPKKA). 2 consecutive short sequence motifs (SPKK motif) follow at residues 140-143 (SPKK) and 147-150 (SPKK). Over residues 140-151 (SPKKTTKSPKKA) the composition is skewed to basic residues.

This sequence belongs to the histone H2A family. In terms of assembly, the nucleosome is a histone octamer containing two molecules each of H2A, H2B, H3 and H4 assembled in one H3-H4 heterotetramer and two H2A-H2B heterodimers. The octamer wraps approximately 147 bp of DNA. Phosphorylated within its C-terminal part, probably at the SPKK motifs.

Its subcellular location is the nucleus. It localises to the chromosome. In terms of biological role, core component of nucleosome. Nucleosomes wrap and compact DNA into chromatin, limiting DNA accessibility to the cellular machineries which require DNA as a template. Histones thereby play a central role in transcription regulation, DNA repair, DNA replication and chromosomal stability. DNA accessibility is regulated via a complex set of post-translational modifications of histones, also called histone code, and nucleosome remodeling. In Triticum aestivum (Wheat), this protein is Histone H2A.2.1.